Consider the following 414-residue polypeptide: Histidine--tRNA ligase (414 aa).

Belongs to the class-II aminoacyl-tRNA synthetase family. As to quaternary structure, homodimer.

The protein resides in the cytoplasm. The catalysed reaction is tRNA(His) + L-histidine + ATP = L-histidyl-tRNA(His) + AMP + diphosphate + H(+). This chain is Histidine--tRNA ligase, found in Anaeromyxobacter dehalogenans (strain 2CP-1 / ATCC BAA-258).